Reading from the N-terminus, the 212-residue chain is Regulatory protein RecX (212 aa).

The protein belongs to the RecX family.

It is found in the cytoplasm. Modulates RecA activity. This is Regulatory protein RecX from Clostridium botulinum (strain Eklund 17B / Type B).